Reading from the N-terminus, the 376-residue chain is Alanine racemase (376 aa).

The active-site Proton acceptor; specific for D-alanine is K44. K44 carries the N6-(pyridoxal phosphate)lysine modification. Position 139 (R139) interacts with substrate. Residue Y271 is the Proton acceptor; specific for L-alanine of the active site. M319 serves as a coordination point for substrate.

It belongs to the alanine racemase family. Pyridoxal 5'-phosphate serves as cofactor.

The catalysed reaction is L-alanine = D-alanine. Its pathway is amino-acid biosynthesis; D-alanine biosynthesis; D-alanine from L-alanine: step 1/1. Catalyzes the interconversion of L-alanine and D-alanine. May also act on other amino acids. The chain is Alanine racemase (alr) from Bordetella petrii (strain ATCC BAA-461 / DSM 12804 / CCUG 43448).